The following is a 491-amino-acid chain: Probable glycine dehydrogenase (decarboxylating) subunit 2 (491 aa).

An N6-(pyridoxal phosphate)lysine modification is found at lysine 274.

The protein belongs to the GcvP family. C-terminal subunit subfamily. In terms of assembly, the glycine cleavage system is composed of four proteins: P, T, L and H. In this organism, the P 'protein' is a heterodimer of two subunits. Requires pyridoxal 5'-phosphate as cofactor.

The catalysed reaction is N(6)-[(R)-lipoyl]-L-lysyl-[glycine-cleavage complex H protein] + glycine + H(+) = N(6)-[(R)-S(8)-aminomethyldihydrolipoyl]-L-lysyl-[glycine-cleavage complex H protein] + CO2. Its function is as follows. The glycine cleavage system catalyzes the degradation of glycine. The P protein binds the alpha-amino group of glycine through its pyridoxal phosphate cofactor; CO(2) is released and the remaining methylamine moiety is then transferred to the lipoamide cofactor of the H protein. The polypeptide is Probable glycine dehydrogenase (decarboxylating) subunit 2 (Shouchella clausii (strain KSM-K16) (Alkalihalobacillus clausii)).